The chain runs to 484 residues: tRNA-2-methylthio-N(6)-dimethylallyladenosine synthase (484 aa).

One can recognise an MTTase N-terminal domain in the interval 36-153 (GKLYIKTHGC…LPELIRARRE (118 aa)). Residues C45, C82, C116, C190, C194, and C197 each coordinate [4Fe-4S] cluster. Residues 176 to 415 (RAEGPSAFVS…HISAHAASIS (240 aa)) form the Radical SAM core domain. One can recognise a TRAM domain in the interval 416 to 479 (QSMVGSVQRV…SNSLRGRIQL (64 aa)). Positions 428–450 (EGPSRRDPNELTGKSENMRPVNF) are disordered.

This sequence belongs to the methylthiotransferase family. MiaB subfamily. Monomer. Requires [4Fe-4S] cluster as cofactor.

Its subcellular location is the cytoplasm. The enzyme catalyses N(6)-dimethylallyladenosine(37) in tRNA + (sulfur carrier)-SH + AH2 + 2 S-adenosyl-L-methionine = 2-methylsulfanyl-N(6)-dimethylallyladenosine(37) in tRNA + (sulfur carrier)-H + 5'-deoxyadenosine + L-methionine + A + S-adenosyl-L-homocysteine + 2 H(+). Catalyzes the methylthiolation of N6-(dimethylallyl)adenosine (i(6)A), leading to the formation of 2-methylthio-N6-(dimethylallyl)adenosine (ms(2)i(6)A) at position 37 in tRNAs that read codons beginning with uridine. This chain is tRNA-2-methylthio-N(6)-dimethylallyladenosine synthase, found in Xanthomonas oryzae pv. oryzae (strain PXO99A).